We begin with the raw amino-acid sequence, 159 residues long: Ribosomal RNA large subunit methyltransferase H (159 aa).

S-adenosyl-L-methionine-binding positions include Leu-76, Gly-108, and 127–132 (FSKMTF).

Belongs to the RNA methyltransferase RlmH family. As to quaternary structure, homodimer.

The protein resides in the cytoplasm. It catalyses the reaction pseudouridine(1915) in 23S rRNA + S-adenosyl-L-methionine = N(3)-methylpseudouridine(1915) in 23S rRNA + S-adenosyl-L-homocysteine + H(+). Functionally, specifically methylates the pseudouridine at position 1915 (m3Psi1915) in 23S rRNA. The sequence is that of Ribosomal RNA large subunit methyltransferase H from Clostridium kluyveri (strain NBRC 12016).